We begin with the raw amino-acid sequence, 440 residues long: D-serine dehydratase (440 aa).

Lysine 116 bears the N6-(pyridoxal phosphate)lysine mark.

This sequence belongs to the serine/threonine dehydratase family. DsdA subfamily. As to quaternary structure, monomer. Requires pyridoxal 5'-phosphate as cofactor.

It carries out the reaction D-serine = pyruvate + NH4(+). This chain is D-serine dehydratase, found in Salmonella typhimurium (strain LT2 / SGSC1412 / ATCC 700720).